A 154-amino-acid chain; its full sequence is Lipoprotein signal peptidase (154 aa).

Helical transmembrane passes span 7–27 (VLYL…KNYI), 58–78 (IFSG…AVVV), and 88–108 (NWLF…NFID). Residues Asp117 and Asp133 contribute to the active site. Residues 128–148 (IFNIADSAITVGIVLVFIYLI) form a helical membrane-spanning segment.

The protein belongs to the peptidase A8 family.

It localises to the cell membrane. The catalysed reaction is Release of signal peptides from bacterial membrane prolipoproteins. Hydrolyzes -Xaa-Yaa-Zaa-|-(S,diacylglyceryl)Cys-, in which Xaa is hydrophobic (preferably Leu), and Yaa (Ala or Ser) and Zaa (Gly or Ala) have small, neutral side chains.. The protein operates within protein modification; lipoprotein biosynthesis (signal peptide cleavage). This protein specifically catalyzes the removal of signal peptides from prolipoproteins. This Lactobacillus gasseri (strain ATCC 33323 / DSM 20243 / BCRC 14619 / CIP 102991 / JCM 1131 / KCTC 3163 / NCIMB 11718 / NCTC 13722 / AM63) protein is Lipoprotein signal peptidase.